We begin with the raw amino-acid sequence, 478 residues long: Violaxanthin de-epoxidase, chloroplastic (478 aa).

The stretch at 388-453 (LVERLEKKVE…RELSKEEMDV (66 aa)) forms a coiled coil.

The protein belongs to the calycin superfamily. Lipocalin family.

The protein resides in the plastid. It localises to the chloroplast thylakoid membrane. It catalyses the reaction all-trans-violaxanthin + 2 L-ascorbate = all-trans-zeaxanthin + 2 L-dehydroascorbate + 2 H2O. Its function is as follows. Part of the xanthophyll (or violaxanthin) cycle for controlling the concentration of zeaxanthin in chloroplasts. Catalyzes the two-step mono de-epoxidation reaction. Stereospecific for all-trans xanthophylls. Zeaxanthin induces the dissipation of excitation energy in the chlorophyll of the light-harvesting protein complex of photosystem II. This is Violaxanthin de-epoxidase, chloroplastic (VDE1) from Nicotiana tabacum (Common tobacco).